Here is a 256-residue protein sequence, read N- to C-terminus: Large ribosomal subunit protein eL8A (256 aa).

Residues 1–37 form a disordered region; it reads MAPGKKVAPAPFGAKSTKSNKTRNPLTHSTPKNFGIG. Positions 16-32 are enriched in polar residues; it reads STKSNKTRNPLTHSTPK.

The protein belongs to the eukaryotic ribosomal protein eL8 family. Component of the large ribosomal subunit (LSU). Mature yeast ribosomes consist of a small (40S) and a large (60S) subunit. The 40S small subunit contains 1 molecule of ribosomal RNA (18S rRNA) and 33 different proteins (encoded by 57 genes). The large 60S subunit contains 3 rRNA molecules (25S, 5.8S and 5S rRNA) and 46 different proteins (encoded by 81 genes).

It localises to the cytoplasm. Component of the ribosome, a large ribonucleoprotein complex responsible for the synthesis of proteins in the cell. The small ribosomal subunit (SSU) binds messenger RNAs (mRNAs) and translates the encoded message by selecting cognate aminoacyl-transfer RNA (tRNA) molecules. The large subunit (LSU) contains the ribosomal catalytic site termed the peptidyl transferase center (PTC), which catalyzes the formation of peptide bonds, thereby polymerizing the amino acids delivered by tRNAs into a polypeptide chain. The nascent polypeptides leave the ribosome through a tunnel in the LSU and interact with protein factors that function in enzymatic processing, targeting, and the membrane insertion of nascent chains at the exit of the ribosomal tunnel. The chain is Large ribosomal subunit protein eL8A from Saccharomyces cerevisiae (strain ATCC 204508 / S288c) (Baker's yeast).